The primary structure comprises 350 residues: Dauer larva development regulatory growth factor daf-7 (350 aa).

Residues 1 to 21 (MFMASSLPVFIFLLSLPHGLT) form the signal peptide. Residues 22-234 (FNCTNSGVCI…TRPKGSRKRR (213 aa)) constitute a propeptide that is removed on maturation. Asparagine 23 carries an N-linked (GlcNAc...) asparagine glycan. Intrachain disulfides connect cysteine 241-cysteine 251, cysteine 250-cysteine 315, cysteine 278-cysteine 347, and cysteine 282-cysteine 349.

This sequence belongs to the TGF-beta family. Expressed in the chemosensory neurons, including in the ASJ neurons in males. Expressed in the ASI neurons.

The protein resides in the secreted. Functionally, under harsh environmental conditions, larvae enter a developmentally arrested state known as dauer; TGF-beta-like daf-7 acts to inhibit dauer larva formation and promote growth. May be a ligand to cell surface receptor daf-4. May act as a negative regulator of dauer larva development by transducing chemosensory information from ASI neurons. Involved in sensitivity to CO2 levels. Involved in mate searching behavior of males, acting in concert with the neuropeptide pdf-1. In AWC neurons, acts to promote expression of srsx-3, a member of the GPCR family. The chain is Dauer larva development regulatory growth factor daf-7 from Caenorhabditis elegans.